A 351-amino-acid polypeptide reads, in one-letter code: Dysbindin (351 aa).

S11 bears the Phosphoserine mark. Residues 88–181 (EKKKTSLVEL…ELDAEHAQKV (94 aa)) are a coiled coil. Residues 173 to 331 (LDAEHAQKVL…DEEEVQVDTA (159 aa)) are dysbindin. The Nuclear export signal signature appears at 243–256 (LMDISDQEALDVFL). The segment at 286 to 351 (PNPSELRAKP…TPDGGEDSDS (66 aa)) is disordered. Positions 296–305 (PSSSSTCTDS) are enriched in polar residues. Phosphoserine occurs at positions 316, 321, and 349.

It belongs to the dysbindin family. In terms of assembly, interacts (via its coiled coil domain) with KXD1. Interacts with CMYA5, PI4K2 and RNF151. Component of the biogenesis of lysosome-related organelles complex 1 (BLOC-1) composed of at least BLOC1S1, BLOC1S2, BLOC1S3, BLOC1S4, BLOC1S5, BLOC1S6, DTNBP1/BLOC1S7 and SNAPIN/BLOC1S8. Interacts directly in the complex with BLOC1S5, BLOC1S6 and SNAPIN/BLOC1S8. The BLOC-1 complex associates with the AP-3 protein complex and membrane protein cargos. This BLOC-1 complex also associates with the BLOC-2 complex in endosomes. Binds to DTNA and DTNB but may not be a physiological binding partner. Interacts (isoform 1 and isoform 2 only) with the DNA-dependent protein kinase complex DNA-PK; the interaction phosphorylates DTNBP1 in vitro. Interacts directly in this complex with XRCC5 and XRCC6. Interacts with AP3M1, AP3B2 and TRIM32. Interacts with XPO1; the interaction exports DTNBP1 out of the nucleus. Ubiquitinated by TRIM32. Ubiquitination leads to DTNBP1 degradation. In terms of processing, isoforms 1 and 2 highly phosphorylated by PRKDC in vitro. Isoform 3 only weakly phosphorylated by PRKDC in vitro. In terms of tissue distribution, detected in brain, in neurons and in neuropil. Isoform 1 is expressed in the cerebral cortex, and hippocampal frontal (HF). Specific expression in the posterior half of the superior temporal gyrus (pSTG). Higher expression of isoform 2 and 3 in the HF than in the pSTG while isoform 1 shows no difference in expression in these areas. In the HF, detected in dentate gyrus (DG) and in pyramidal cells of hippocampus CA2 and CA3 (at protein level). Expressed in all principal neuronal populations of the HF, namely pyramidal neurons in the subiculum and CA1-3, granule cells in the dense cell layer of the DG (DGg), and polymorph cells in the hilus of the DG (DGh). Maximal levels in CA2, CA3, and DGh. Isoform 2 not expressed in the cerebral cortex.

The protein localises to the cytoplasm. It is found in the cytoplasmic vesicle membrane. It localises to the endosome membrane. Its subcellular location is the melanosome membrane. The protein resides in the postsynaptic density. The protein localises to the endoplasmic reticulum. It is found in the nucleus. It localises to the cytoplasmic vesicle. Its subcellular location is the secretory vesicle. The protein resides in the synaptic vesicle membrane. The protein localises to the postsynaptic cell membrane. Component of the BLOC-1 complex, a complex that is required for normal biogenesis of lysosome-related organelles (LRO), such as platelet dense granules and melanosomes. In concert with the AP-3 complex, the BLOC-1 complex is required to target membrane protein cargos into vesicles assembled at cell bodies for delivery into neurites and nerve terminals. The BLOC-1 complex, in association with SNARE proteins, is also proposed to be involved in neurite extension. Associates with the BLOC-2 complex to facilitate the transport of TYRP1 independent of AP-3 function. Plays a role in synaptic vesicle trafficking and in neurotransmitter release. Plays a role in the regulation of cell surface exposure of DRD2. May play a role in actin cytoskeleton reorganization and neurite outgrowth. May modulate MAPK8 phosphorylation. Appears to promote neuronal transmission and viability through regulating the expression of SNAP25 and SYN1, modulating PI3-kinase-Akt signaling and influencing glutamatergic release. Regulates the expression of SYN1 through binding to its promoter. Modulates prefrontal cortical activity via the dopamine/D2 pathway. The sequence is that of Dysbindin (DTNBP1) from Homo sapiens (Human).